The primary structure comprises 423 residues: Alpha-1-antichymotrypsin (423 aa).

Positions 1 to 23 are cleaved as a signal peptide; that stretch reads MERMLPLLALGLLAAGFCPAVLC. N-linked (GlcNAc...) asparagine glycans are attached at residues Asn33, Asn93, Asn106, Asn127, and Asn186. Residues 235–237 mediate DNA binding; sequence KKK. Asn271 is a glycosylation site (N-linked (GlcNAc...) asparagine). Positions 369-394 are RCL; that stretch reads GTEASAATAVKITLLSALVETRTIVR. The O-glycosylated at one site stretch occupies residues 381–389; the sequence is TLLSALVET.

The protein belongs to the serpin family. As to quaternary structure, interacts with DNAJC1. In terms of processing, N- and O-glycosylated. Plasma. Synthesized in the liver. Like the related alpha-1-antitrypsin, its concentration increases in the acute phase of inflammation or infection. Found in the amyloid plaques from the hippocampus of Alzheimer disease brains.

Its subcellular location is the secreted. Functionally, although its physiological function is unclear, it can inhibit neutrophil cathepsin G and mast cell chymase, both of which can convert angiotensin-1 to the active angiotensin-2. This chain is Alpha-1-antichymotrypsin (SERPINA3), found in Homo sapiens (Human).